Consider the following 427-residue polypeptide: Probable WRKY transcription factor 35 (427 aa).

Disordered stretches follow at residues 1 to 45 and 266 to 336; these read MDNF…DLHV and YTSE…HPPF. Pro residues predominate over residues 23 to 40; that stretch reads SPGPPEGPSPSSMSPPPT. Positions 209–275 form a DNA-binding region, WRKY; the sequence is SGEVVPSDLW…YTSEHNHPWP (67 aa). The span at 284–310 shows a compositional bias: low complexity; the sequence is STRSSSSSSLNPSSKSSTAAATTSPSS. The span at 311–333 shows a compositional bias: polar residues; it reads RVFQNNSSKDEPNNSNLPSSSTH.

Belongs to the WRKY group II-e family.

The protein localises to the nucleus. Its function is as follows. Transcription factor. Interacts specifically with the W box (5'-(T)TGAC[CT]-3'), a frequently occurring elicitor-responsive cis-acting element. This chain is Probable WRKY transcription factor 35 (WRKY35), found in Arabidopsis thaliana (Mouse-ear cress).